The primary structure comprises 205 residues: MTFLPLKSPLKFYAVVPTADWVERMVEAGADTVQLRCKALHGDELKREIARCVAACQGSHTQLFINDHWREAIEAGAYGVHLGQEDMDTADLAAIAAAGLRLGLSTHSVAELDRALSVHPSYIASGAIFPTTTKQMPTAPQGLDKLREYVKQAGGTPVVAIGGIDLNNARAVLATGVSSLAAVRAVTKAANPEAVVKAFQALWDG.

Residues 34-38 and Asn66 contribute to the 4-amino-2-methyl-5-(diphosphooxymethyl)pyrimidine site; that span reads QLRCK. Residues Asp67 and Asp86 each contribute to the Mg(2+) site. A 4-amino-2-methyl-5-(diphosphooxymethyl)pyrimidine-binding site is contributed by Ser105. Position 131–133 (131–133) interacts with 2-[(2R,5Z)-2-carboxy-4-methylthiazol-5(2H)-ylidene]ethyl phosphate; the sequence is TTT. Residue Lys134 participates in 4-amino-2-methyl-5-(diphosphooxymethyl)pyrimidine binding. Gly163 contacts 2-[(2R,5Z)-2-carboxy-4-methylthiazol-5(2H)-ylidene]ethyl phosphate.

Belongs to the thiamine-phosphate synthase family. The cofactor is Mg(2+).

It carries out the reaction 2-[(2R,5Z)-2-carboxy-4-methylthiazol-5(2H)-ylidene]ethyl phosphate + 4-amino-2-methyl-5-(diphosphooxymethyl)pyrimidine + 2 H(+) = thiamine phosphate + CO2 + diphosphate. It catalyses the reaction 2-(2-carboxy-4-methylthiazol-5-yl)ethyl phosphate + 4-amino-2-methyl-5-(diphosphooxymethyl)pyrimidine + 2 H(+) = thiamine phosphate + CO2 + diphosphate. The enzyme catalyses 4-methyl-5-(2-phosphooxyethyl)-thiazole + 4-amino-2-methyl-5-(diphosphooxymethyl)pyrimidine + H(+) = thiamine phosphate + diphosphate. Its pathway is cofactor biosynthesis; thiamine diphosphate biosynthesis; thiamine phosphate from 4-amino-2-methyl-5-diphosphomethylpyrimidine and 4-methyl-5-(2-phosphoethyl)-thiazole: step 1/1. Condenses 4-methyl-5-(beta-hydroxyethyl)thiazole monophosphate (THZ-P) and 2-methyl-4-amino-5-hydroxymethyl pyrimidine pyrophosphate (HMP-PP) to form thiamine monophosphate (TMP). The sequence is that of Thiamine-phosphate synthase from Neisseria meningitidis serogroup A / serotype 4A (strain DSM 15465 / Z2491).